Consider the following 165-residue polypeptide: Transcription factor E (165 aa).

Residues 5 to 87 form the HTH TFE/IIEalpha-type domain; that stretch reads NDPVVRGYLL…LWQLDLSDIE (83 aa).

The protein belongs to the TFE family. Monomer. Interaction with RNA polymerase subunits RpoF and RpoE is necessary for Tfe stimulatory transcription activity. Able to interact with Tbp and RNA polymerase in the absence of DNA promoter. Interacts both with the preinitiation and elongation complexes.

Transcription factor that plays a role in the activation of archaeal genes transcribed by RNA polymerase. Facilitates transcription initiation by enhancing TATA-box recognition by TATA-box-binding protein (Tbp), and transcription factor B (Tfb) and RNA polymerase recruitment. Not absolutely required for transcription in vitro, but particularly important in cases where Tbp or Tfb function is not optimal. It dynamically alters the nucleic acid-binding properties of RNA polymerases by stabilizing the initiation complex and destabilizing elongation complexes. Seems to translocate with the RNA polymerase following initiation and acts by binding to the non template strand of the transcription bubble in elongation complexes. The protein is Transcription factor E of Methanococcoides burtonii (strain DSM 6242 / NBRC 107633 / OCM 468 / ACE-M).